Consider the following 297-residue polypeptide: Large ribosomal subunit protein uL18 (297 aa).

At G2 the chain carries N-acetylglycine. N6-acetyllysine is present on residues K5 and K48. S185 bears the Phosphoserine mark. K220 is modified (N6-acetyllysine; alternate). K220 is covalently cross-linked (Glycyl lysine isopeptide (Lys-Gly) (interchain with G-Cter in SUMO1); alternate). Residue K220 forms a Glycyl lysine isopeptide (Lys-Gly) (interchain with G-Cter in SUMO2); alternate linkage. Phosphothreonine is present on T232. Positions 253–297 (YEKKPKKEVKKKRWNRPKMSLAQKKDRVAQKKASFLRAQERAAES) are disordered. A compositionally biased stretch (basic residues) spans 258-268 (KKEVKKKRWNR). At S272 the chain carries Phosphoserine.

It belongs to the universal ribosomal protein uL18 family. Component of the large ribosomal subunit (LSU). Part of the 5S RNP complex, which is a LSU subcomplex composed of the 5S RNA, RPL5 and RPL11. Component of a hexameric 5S RNP precursor complex, composed of 5S RNA, RRS1, RPF2/BXDC1, RPL5, RPL11 and HEATR3; this complex acts as a precursor for ribosome assembly. Interacts with NVL in an ATP-dependent manner. Interacts with RRP1B. Interacts with IPO5, IPO7 and KPNB1; these interactions may be involved in RPL5 nuclear import for the assembly of ribosomal subunits. Interacts with RRP1B.

It is found in the cytoplasm. It localises to the nucleus. The protein localises to the nucleolus. Its function is as follows. Component of the ribosome, a large ribonucleoprotein complex responsible for the synthesis of proteins in the cell. The small ribosomal subunit (SSU) binds messenger RNAs (mRNAs) and translates the encoded message by selecting cognate aminoacyl-transfer RNA (tRNA) molecules. The large subunit (LSU) contains the ribosomal catalytic site termed the peptidyl transferase center (PTC), which catalyzes the formation of peptide bonds, thereby polymerizing the amino acids delivered by tRNAs into a polypeptide chain. The nascent polypeptides leave the ribosome through a tunnel in the LSU and interact with protein factors that function in enzymatic processing, targeting, and the membrane insertion of nascent chains at the exit of the ribosomal tunnel. As part of the 5S RNP/5S ribonucleoprotein particle it is an essential component of the LSU, required for its formation and the maturation of rRNAs. It also couples ribosome biogenesis to p53/TP53 activation. As part of the 5S RNP it accumulates in the nucleoplasm and inhibits MDM2, when ribosome biogenesis is perturbed, mediating the stabilization and the activation of TP53. This chain is Large ribosomal subunit protein uL18 (RPL5), found in Macaca fascicularis (Crab-eating macaque).